The primary structure comprises 88 residues: Protein MATERNALLY EXPRESSED GENE 1 (88 aa).

Residues 1-27 (MEYKKRVDALVFFSLLLLGYFAAHAHG) form the signal peptide. An N-linked (GlcNAc...) asparagine glycan is attached at Asn36. 2 cysteine pairs are disulfide-bonded: Cys65–Cys87 and Cys68–Cys76.

Belongs to the MEG family. Glycosylated. As to expression, expressed exclusively in endosperm. Found in basal endosperm transfer cells.

The protein resides in the secreted. It localises to the cell wall. It is found in the cell membrane. Its subcellular location is the extracellular space. The protein localises to the extracellular matrix. Its function is as follows. Regulates maternal nutrient uptake, sucrose partitioning, and seed biomass yield. Necessary and sufficient for the establishment and differentiation of the endosperm nutrient transfer cells located at the mother:seed interface. Exclusive expression of the maternal allele at the early stages of endosperm development. The maternal allele is hypomethylated. At later stages, expression becomes biallelic. Regulated by the transcription factor MRP1. The sequence is that of Protein MATERNALLY EXPRESSED GENE 1 (MEG1) from Zea mays (Maize).